We begin with the raw amino-acid sequence, 265 residues long: NAD kinase (265 aa).

Asp45 serves as the catalytic Proton acceptor. Residues 45-46 (DG), 122-123 (NE), Arg148, Asp150, 161-166 (TAYNKS), Ala185, and Gln223 each bind NAD(+).

Belongs to the NAD kinase family. A divalent metal cation is required as a cofactor.

It localises to the cytoplasm. It carries out the reaction NAD(+) + ATP = ADP + NADP(+) + H(+). Involved in the regulation of the intracellular balance of NAD and NADP, and is a key enzyme in the biosynthesis of NADP. Catalyzes specifically the phosphorylation on 2'-hydroxyl of the adenosine moiety of NAD to yield NADP. This chain is NAD kinase, found in Enterococcus faecalis (strain ATCC 700802 / V583).